The primary structure comprises 141 residues: Nucleoside diphosphate kinase (141 aa).

Lys11, Phe59, Arg87, Thr93, Arg104, and Asn114 together coordinate ATP. His117 serves as the catalytic Pros-phosphohistidine intermediate.

The protein belongs to the NDK family. In terms of assembly, homotetramer. The cofactor is Mg(2+).

Its subcellular location is the cytoplasm. The catalysed reaction is a 2'-deoxyribonucleoside 5'-diphosphate + ATP = a 2'-deoxyribonucleoside 5'-triphosphate + ADP. The enzyme catalyses a ribonucleoside 5'-diphosphate + ATP = a ribonucleoside 5'-triphosphate + ADP. Functionally, major role in the synthesis of nucleoside triphosphates other than ATP. The ATP gamma phosphate is transferred to the NDP beta phosphate via a ping-pong mechanism, using a phosphorylated active-site intermediate. The sequence is that of Nucleoside diphosphate kinase from Yersinia enterocolitica serotype O:8 / biotype 1B (strain NCTC 13174 / 8081).